A 647-amino-acid polypeptide reads, in one-letter code: Carboxypeptidase Z (647 aa).

The first 18 residues, Met1–Pro18, serve as a signal peptide directing secretion. Positions Ala35–Pro157 constitute an FZ domain. Intrachain disulfides connect Cys40–Cys106, Cys48–Cys99, Cys90–Cys126, Cys115–Cys154, and Cys119–Cys143. Positions Lys183 to Val499 constitute a Peptidase M14 domain. Positions 245 and 248 each coordinate Zn(2+). Asn278 is a glycosylation site (N-linked (GlcNAc...) asparagine). His377 contacts Zn(2+). The active-site Proton donor/acceptor is the Glu469.

Belongs to the peptidase M14 family. As to quaternary structure, interacts with WNT4 vie its FZ domain. It depends on Zn(2+) as a cofactor. As to expression, in the early embryo it is initially expressed throughout the somites and subsequently becomes restricted to the sclerotome. Expressed in somites, paraxial head mesoderm and apical ectodermal ridge.

It is found in the secreted. The protein localises to the extracellular space. Its subcellular location is the extracellular matrix. With respect to regulation, inhibited by 2-mercaptomethyl-3-guanidinoethylthiopropanoic acid (MGTA) and guanidinoethylmercaptosuccinic acid (GEMSA). Inhibited by chelating agents such as EDTA and EGTA. In terms of biological role, cleaves substrates with C-terminal arginine residues. Modulates the Wnt signaling pathway, probably by cleaving some undefined protein. Regulates the development of skeletal elements during development, probably by activating WNT4. The protein is Carboxypeptidase Z (CPZ) of Gallus gallus (Chicken).